A 455-amino-acid chain; its full sequence is Ribulose bisphosphate carboxylase large chain (455 aa).

Lys5 is subject to N6,N6,N6-trimethyllysine. Residues Asn114 and Thr164 each coordinate substrate. Catalysis depends on Lys166, which acts as the Proton acceptor. Substrate is bound at residue Lys168. 3 residues coordinate Mg(2+): Lys192, Asp194, and Glu195. The residue at position 192 (Lys192) is an N6-carboxylysine. The active-site Proton acceptor is His285. The substrate site is built by Arg286, His318, and Ser370.

This sequence belongs to the RuBisCO large chain family. Type I subfamily. In terms of assembly, heterohexadecamer of 8 large chains and 8 small chains; disulfide-linked. The disulfide link is formed within the large subunit homodimers. Mg(2+) serves as cofactor. Post-translationally, the disulfide bond which can form in the large chain dimeric partners within the hexadecamer appears to be associated with oxidative stress and protein turnover.

Its subcellular location is the plastid. It is found in the chloroplast. It carries out the reaction 2 (2R)-3-phosphoglycerate + 2 H(+) = D-ribulose 1,5-bisphosphate + CO2 + H2O. The catalysed reaction is D-ribulose 1,5-bisphosphate + O2 = 2-phosphoglycolate + (2R)-3-phosphoglycerate + 2 H(+). RuBisCO catalyzes two reactions: the carboxylation of D-ribulose 1,5-bisphosphate, the primary event in carbon dioxide fixation, as well as the oxidative fragmentation of the pentose substrate in the photorespiration process. Both reactions occur simultaneously and in competition at the same active site. The sequence is that of Ribulose bisphosphate carboxylase large chain from Senna didymobotrya (Popcorn cassia).